The following is a 525-amino-acid chain: MTENIHKHRILILDFGSQYTQLVARRVRELGVYCELWAWDVTEAQIRDFNPSGIILSGGPESTTEENSPRAPQYVFEAGVPIFGVCYGMQTMAMQLGGHVEASNEREFGYAQVEVVNDSALVRGIEDALTADGKPLLDVWMSHGDKVTAIPSDFVTVASTESCPFAIMANEEKRFYGVQFHPEVTHTRQGMRMLERFVRDICQCEALWTPAKIIDDAVARIREQVGDDKVILGLSGGVDSSVTAMLLHRAIGKNLTCVFVDNGLLRLNEAEQVLDMFGDHFGLNIVHVPAEDRFLSALAGENDPEAKRKIIGRVFVEVFDEEALKLEDVKWLAQGTIYPDVIESAASATGKAHVIKSHHNVGGLPKEMKMGLVEPLKELFKDEVREIGLELGLPYDMLYRHPFPGPGLGVRVLGEVKKEYCDLLRRADAIFIEELRKADLYDKVSQAFTVFLPVRSVGVMGDGRKYDWVVSLRAVETIDFMTAHWAHLPYDFLGRVSNRIINEVNGISRVVYDISGKPPATIEWE.

Positions 9–207 (RILILDFGSQ…VRDICQCEAL (199 aa)) constitute a Glutamine amidotransferase type-1 domain. Residue Cys86 is the Nucleophile of the active site. Catalysis depends on residues His181 and Glu183. The GMPS ATP-PPase domain maps to 208-400 (WTPAKIIDDA…LGLPYDMLYR (193 aa)). 235-241 (SGGVDSS) provides a ligand contact to ATP.

In terms of assembly, homodimer.

It catalyses the reaction XMP + L-glutamine + ATP + H2O = GMP + L-glutamate + AMP + diphosphate + 2 H(+). The protein operates within purine metabolism; GMP biosynthesis; GMP from XMP (L-Gln route): step 1/1. In terms of biological role, catalyzes the synthesis of GMP from XMP. The sequence is that of GMP synthase [glutamine-hydrolyzing] from Shigella flexneri serotype 5b (strain 8401).